The primary structure comprises 248 residues: Aquaporin Z (248 aa).

2 helical membrane passes run 11–31 and 36–56; these read FIGT…AAAF and IGFA…AFAI. The NPA 1 signature appears at 65 to 67; sequence NPA. The next 3 helical transmembrane spans lie at 87–107, 132–152, and 161–181; these read IAAQ…IAGG, LLAC…IILG, and GFAP…SIPV. Residues 187 to 189 carry the NPA 2 motif; the sequence is NPA. Residues 203 to 223 traverse the membrane as a helical segment; the sequence is IAELWLFWLAPIVGAALAGLF.

It belongs to the MIP/aquaporin (TC 1.A.8) family. As to quaternary structure, homotetramer.

Its subcellular location is the cell inner membrane. It catalyses the reaction H2O(in) = H2O(out). In terms of biological role, channel that permits osmotically driven movement of water in both directions. It is involved in the osmoregulation and in the maintenance of cell turgor during volume expansion in rapidly growing cells. It mediates rapid entry or exit of water in response to abrupt changes in osmolarity. The sequence is that of Aquaporin Z from Gloeobacter violaceus (strain ATCC 29082 / PCC 7421).